The primary structure comprises 314 residues: 2,3-dihydroxyphenylpropionate/2,3-dihydroxicinnamic acid 1,2-dioxygenase (314 aa).

Residue His-115 is the Proton donor of the active site. Catalysis depends on His-179, which acts as the Proton acceptor.

It belongs to the LigB/MhpB extradiol dioxygenase family. As to quaternary structure, homotetramer. Fe(2+) serves as cofactor.

The enzyme catalyses 3-(2,3-dihydroxyphenyl)propanoate + O2 = (2Z,4E)-2-hydroxy-6-oxonona-2,4-dienedioate + H(+). The catalysed reaction is (2E)-3-(2,3-dihydroxyphenyl)prop-2-enoate + O2 = (2Z,4E,7E)-2-hydroxy-6-oxonona-2,4,7-trienedioate + H(+). It participates in aromatic compound metabolism; 3-phenylpropanoate degradation. Catalyzes the non-heme iron(II)-dependent oxidative cleavage of 2,3-dihydroxyphenylpropionic acid and 2,3-dihydroxicinnamic acid into 2-hydroxy-6-ketononadienedioate and 2-hydroxy-6-ketononatrienedioate, respectively. This chain is 2,3-dihydroxyphenylpropionate/2,3-dihydroxicinnamic acid 1,2-dioxygenase, found in Rhodococcus globerulus.